A 314-amino-acid chain; its full sequence is Zinc transporter ZIP3 (314 aa).

The Extracellular segment spans residues 1-3 (MNL). Residues 4–24 (IFAKVLCLLAILVLMMLGSLI) form a helical membrane-spanning segment. Residues 25–41 (PVKISEADFDKSSRSRK) lie on the Cytoplasmic side of the membrane. A helical membrane pass occupies residues 42 to 62 (ILSLSNSFAGGVFLATCFNAL). Topologically, residues 63 to 84 (LPAVREKFFDLLKIGNISTDYP) are extracellular. The helical transmembrane segment at 85-105 (LAETIMMVGFFLTVFVEQTVM) threads the bilayer. Over 106–169 (TFRKEKPSFI…KELSSSSPIR (64 aa)) the chain is Cytoplasmic. Residues 170–190 (LFSLVFALSAHSVFEGLALGL) form a helical membrane-spanning segment. Residues 191–196 (QEDGNK) lie on the Extracellular side of the membrane. A helical membrane pass occupies residues 197–217 (LLSLFIGVVIHETLVAMALGV). The Cytoplasmic portion of the chain corresponds to 218–229 (SMAKVNTHLKDA). A helical transmembrane segment spans residues 230–250 (IKMAVLVSTMIPIGIVVGMAI). Over 251-262 (QSAQNMASSIAS) the chain is Extracellular. The helical transmembrane segment at 263 to 283 (ALLQGIAGGTFIFVTFFEILV) threads the bilayer. Topologically, residues 284-292 (KELEEKNDR) are cytoplasmic. Residues 293–313 (LLKVLFLVLGYTVLAVLVLFK) form a helical membrane-spanning segment. Residue Trp-314 is a topological domain, extracellular.

This sequence belongs to the ZIP transporter (TC 2.A.5) family.

It localises to the cell membrane. Its subcellular location is the apical cell membrane. It carries out the reaction Zn(2+)(in) = Zn(2+)(out). Functionally, transporter for the divalent cation Zn(2+). Mediates the influx of Zn(2+) into cells from extracellular space. The chain is Zinc transporter ZIP3 (slc39a3) from Xenopus tropicalis (Western clawed frog).